The primary structure comprises 590 residues: G protein-coupled receptor kinase 5 (590 aa).

Positions 1–185 are N-terminal; that stretch reads MELENIVANT…LERQPVTKNT (185 aa). Residues 20 to 39 form an interaction with calmodulin region; that stretch reads GGKRKGKSKKWKEILKFPHI. The 119-residue stretch at 53 to 171 folds into the RGS domain; it reads YCSLCDKQPV…LDSMYFDRFL (119 aa). The Protein kinase domain occupies 186-448; sequence FRQYRVLGKG…AAEVKRHPFF (263 aa). Residues 192–200 and Lys-215 each bind ATP; that span reads LGKGGFGEV. Asp-311 (proton acceptor) is an active-site residue. The short motif at 388-395 is the Nuclear localization signal element; sequence RKEKVKRE. The 66-residue stretch at 449-514 folds into the AGC-kinase C-terminal domain; sequence RNMNFKRLEA…GSVPIPWQSE (66 aa). Ser-484 is subject to Phosphoserine; by autocatalysis. A Phosphothreonine; by autocatalysis modification is found at Thr-485. Residues 546 to 565 are sufficient for membrane localization; the sequence is PKKGLLQRLFKRQHQNNSKS. Residues 554–590 are disordered; sequence LFKRQHQNNSKSSPNSKTSFNHHINSNHVSSNSTGSS. The span at 561–590 shows a compositional bias: low complexity; that stretch reads NNSKSSPNSKTSFNHHINSNHVSSNSTGSS. Phosphoserine is present on Ser-579.

This sequence belongs to the protein kinase superfamily. AGC Ser/Thr protein kinase family. GPRK subfamily. In terms of assembly, interacts with ST13 (via the C-terminus 303-319 AA). Interacts with TP53/p53. Interacts with HTR4 (via C-terminus 330-346 AA); this interaction is promoted by 5-HT (serotonin). Interacts with HDAC5. Interacts with GIT1. In terms of processing, autophosphorylated. Autophosphorylation may play a critical role in the regulation of GRK5 kinase activity. In terms of tissue distribution, highest levels in lung, heart, retina, lingual epithelium. Very little in brain, liver, kidney.

Its subcellular location is the cytoplasm. The protein localises to the nucleus. It is found in the cell membrane. The catalysed reaction is [G-protein-coupled receptor] + ATP = [G-protein-coupled receptor]-phosphate + ADP + H(+). Inhibited by calmodulin with an IC(50) of 50 nM. Calmodulin inhibits GRK5 association with receptor and phospholipid. Serine/threonine kinase that phosphorylates preferentially the activated forms of a variety of G-protein-coupled receptors (GPCRs). Such receptor phosphorylation initiates beta-arrestin-mediated receptor desensitization, internalization, and signaling events leading to their down-regulation. Phosphorylates a variety of GPCRs, including adrenergic receptors (Beta-2 adrenergic receptor), muscarinic acetylcholine receptors (more specifically Gi-coupled M2/M4 subtypes), dopamine receptors and opioid receptors. In addition to GPCRs, also phosphorylates various substrates: Hsc70-interacting protein/ST13, TP53/p53, HDAC5, and arrestin-1/ARRB1. Phosphorylation of ARRB1 by GRK5 inhibits G-protein independent MAPK1/MAPK3 signaling downstream of 5HT4-receptors. Phosphorylation of HDAC5, a repressor of myocyte enhancer factor 2 (MEF2) leading to nuclear export of HDAC5 and allowing MEF2-mediated transcription. Phosphorylation of TP53/p53, a crucial tumor suppressor, inhibits TP53/p53-mediated apoptosis. Phosphorylation of ST13 regulates internalization of the chemokine receptor. Phosphorylates rhodopsin (RHO) (in vitro) and a non G-protein-coupled receptor, LRP6 during Wnt signaling (in vitro). This chain is G protein-coupled receptor kinase 5 (GRK5), found in Bos taurus (Bovine).